An 84-amino-acid chain; its full sequence is Carboxysome shell vertex protein CsoS4B (84 aa).

The region spanning 1–77 (MQILQVKKQL…TDLTVGGIID (77 aa)) is the BMV domain.

This sequence belongs to the CcmL/EutN family. CsoS4 subfamily. Homopentamer.

Its subcellular location is the carboxysome. Its function is as follows. Probably forms vertices in the carboxysome, a polyhedral inclusion where RuBisCO (ribulose bisphosphate carboxylase, cbbL-cbbS) is sequestered. Has been modeled to induce curvature upon insertion into an otherwise flat hexagonal layer of major carboxysome subunits. The protein is Carboxysome shell vertex protein CsoS4B of Hydrogenovibrio crunogenus (strain DSM 25203 / XCL-2) (Thiomicrospira crunogena).